The following is a 218-amino-acid chain: MSSLALKIGSLLVRTLSKPIANTIKAQAKEHKAFRKACIEFAQWMHRAEFRITGINRAKSGGANVRLRPLNDAKAVDAGATFLSETFIFTVAGGAILFETWRARRKEKNRRDEVAEAILGLQHEIVRINEIMEKQFVLQKKKNELQSSTEEIDSTEKDFDELHKVILKVERELHTLRQNTPSQNEQAEATPSKEIPRETVSEKADHPPSSNTKSVSTG.

Residues Asn129–Asn179 adopt a coiled-coil conformation. The tract at residues Thr175–Gly218 is disordered. Residues Leu176 to Ala189 are compositionally biased toward polar residues. The span at Glu194 to His206 shows a compositional bias: basic and acidic residues. Polar residues predominate over residues Pro208–Gly218.

The protein belongs to the OPA3 family.

The sequence is that of OPA3-like protein from Schizosaccharomyces pombe (strain 972 / ATCC 24843) (Fission yeast).